The following is a 313-amino-acid chain: Kazal-type serine protease inhibitor domain-containing protein 1 (313 aa).

A signal peptide spans 1–37; sequence MPRVFTGLPANYAAPTLALSLLLPLLLVVWTQLPVSA. An IGFBP N-terminal domain is found at 56 to 136; that stretch reads EGEGCAPCRP…EVPEPLCVCR (81 aa). 7 disulfides stabilise this stretch: Cys60–Cys83, Cys63–Cys85, Cys68–Cys86, Cys74–Cys89, Cys97–Cys115, Cys109–Cys133, and Cys142–Cys175. The 51-residue stretch at 127-177 folds into the Kazal-like domain; it reads EVPEPLCVCRSQRPLCGSDGRTYAQICRLQEAARARLDANLTVVHPGPCES. Residues Asn166 and Asn190 are each glycosylated (N-linked (GlcNAc...) asparagine). The 98-residue stretch at 179-276 folds into the Ig-like C2-type domain; that stretch reads PQILSQPHNI…GQAEASATLT (98 aa). Cys200 and Cys260 form a disulfide bridge. N-linked (GlcNAc...) asparagine glycosylation occurs at Asn284. A disordered region spans residues 290–313; that stretch reads QLQSRSLFPEEEEEAESEELGDYY. A compositionally biased stretch (acidic residues) spans 298–313; that stretch reads PEEEEEAESEELGDYY.

In terms of tissue distribution, highly expressed in the spleen. Moderately expressed in the skin, lung and urinary bladder. Weakly expressed in the brain, tongue, esophagus, stomach, large intestine, liver and bone. Expressed in osteoblastic cells during bone regeneration. Expressed in secretory osteoblasts in the tooth.

Its subcellular location is the secreted. The protein localises to the extracellular space. It is found in the extracellular matrix. Its function is as follows. Involved in the proliferation of osteoblasts during bone formation and bone regeneration. Promotes matrix assembly. The polypeptide is Kazal-type serine protease inhibitor domain-containing protein 1 (Kazald1) (Mus musculus (Mouse)).